Here is a 355-residue protein sequence, read N- to C-terminus: Adenine deaminase (355 aa).

Residues histidine 24, histidine 26, and histidine 204 each coordinate Zn(2+). The Proton donor role is filled by glutamate 207. Residue aspartate 285 participates in Zn(2+) binding. Residue aspartate 286 participates in substrate binding.

This sequence belongs to the metallo-dependent hydrolases superfamily. Adenosine and AMP deaminases family. Adenine deaminase type 2 subfamily. The cofactor is Zn(2+).

The catalysed reaction is adenine + H2O + H(+) = hypoxanthine + NH4(+). Functionally, catalyzes the hydrolytic deamination of adenine to hypoxanthine. Plays an important role in the purine salvage pathway and in nitrogen catabolism. In Geotalea uraniireducens (strain Rf4) (Geobacter uraniireducens), this protein is Adenine deaminase.